The following is a 573-amino-acid chain: 3-(3-hydroxy-phenyl)propionate/3-hydroxycinnamic acid hydroxylase (573 aa).

FAD contacts are provided by residues 18–47 (DVVI…IVEE) and 283–293 (FRKGRMFLAGD).

Belongs to the PheA/TfdB FAD monooxygenase family. The cofactor is FAD.

The enzyme catalyses 3-(3-hydroxyphenyl)propanoate + NADH + O2 + H(+) = 3-(2,3-dihydroxyphenyl)propanoate + NAD(+) + H2O. It carries out the reaction (2E)-3-(3-hydroxyphenyl)prop-2-enoate + NADH + O2 + H(+) = (2E)-3-(2,3-dihydroxyphenyl)prop-2-enoate + NAD(+) + H2O. The protein operates within aromatic compound metabolism; 3-phenylpropanoate degradation. Functionally, catalyzes the insertion of one atom of molecular oxygen into position 2 of the phenyl ring of 3-(3-hydroxyphenyl)propionate (3-HPP) and hydroxycinnamic acid (3HCI). This is 3-(3-hydroxy-phenyl)propionate/3-hydroxycinnamic acid hydroxylase from Mycobacterium sp. (strain KMS).